A 486-amino-acid chain; its full sequence is Cardiolipin synthase A (486 aa).

Helical transmembrane passes span 3–23 and 38–58; these read TFYTVISWLMVFGYWLLIAGV and MAWLLVIYILPLFGIVAYLSF. PLD phosphodiesterase domains lie at 219–246 and 399–426; these read MDLRQHRKVVLIDNYIAYTGSMNMVDPR and EDGLLHTKSVLVDGQLSLVGTVNLDMRS. Catalysis depends on residues His224, Lys226, Asp231, His404, Lys406, and Asp411.

This sequence belongs to the phospholipase D family. Cardiolipin synthase subfamily. ClsA sub-subfamily.

The protein localises to the cell inner membrane. The catalysed reaction is 2 a 1,2-diacyl-sn-glycero-3-phospho-(1'-sn-glycerol) = a cardiolipin + glycerol. Its function is as follows. Catalyzes the reversible phosphatidyl group transfer from one phosphatidylglycerol molecule to another to form cardiolipin (CL) (diphosphatidylglycerol) and glycerol. The sequence is that of Cardiolipin synthase A from Serratia proteamaculans (strain 568).